The primary structure comprises 621 residues: MTDEEPADRDDDSDSTPELELDAVYDAIDAVGRPHLTATEFSRKTDLTPDEARAALERLADDGDIERQDVSEVESVWYPTDIAEVTDRERVVLFPDRREVVVEHPDQFTRAQLSQFARLQDTNRSGGYVYELREEDIWAAPHESLDDLLTTMRDVLGERSPHLEEWVTSQWERARKFRLKTHEDGYVVLEAESDDLMGNVARPKLDDDHLRAPISDSESWVNEDATAEIKRTLYEAGYPVRDDRDLETGDAIEMDLRLRLRDYQQDWVERFTEQGSGVFVGPPGSGKTVAAMGAMAAIGGETLILVPSRELATQWRDELVRHTSLTDDDIGEYHGGEKEIRAVTIATYRTAGMDRHRKLFDQRKWGLIVFDEVHHVPSPIHRRSADLQTKHRLGLTATPTRESDDEEEIFTLIGPPIGTDWGKLFDEGYVAEPEVEIRLVPWGDETEQSEYSSTSGHDRRQAAASNTGKIDEIRYALAENPAAKALVFIEYLDQGEAISEAIDAPFISGETPHARREKLFDEFRRGELTTLVVSRVGDEGIDLPDAELALVASGLGGSRRQGAQRAGRTMRPAGDARMVILATRGTTEEDFVRRQMRHLASKGIRVTETEAEAVEPPAKTE.

Residues 268–417 enclose the Helicase ATP-binding domain; the sequence is VERFTEQGSG…EIFTLIGPPI (150 aa). Residue 281-288 coordinates ATP; it reads GPPGSGKT. The short motif at 371–374 is the DEAH box element; that stretch reads DEVH. Positions 441-465 are disordered; the sequence is PWGDETEQSEYSSTSGHDRRQAAAS. Positions 469-621 constitute a Helicase C-terminal domain; the sequence is KIDEIRYALA…EAVEPPAKTE (153 aa).

Belongs to the helicase family. RAD25/XPB subfamily.

The enzyme catalyses Couples ATP hydrolysis with the unwinding of duplex DNA by translocating in the 3'-5' direction.. It catalyses the reaction ATP + H2O = ADP + phosphate + H(+). The polypeptide is Putative DNA 3'-5' helicase Rad25 (Haloarcula marismortui (strain ATCC 43049 / DSM 3752 / JCM 8966 / VKM B-1809) (Halobacterium marismortui)).